A 147-amino-acid polypeptide reads, in one-letter code: Large ribosomal subunit protein uL15 (147 aa).

Positions 1-46 (MSIRLENLSYTPGARKEKHRKGRGHAAGKGKQAGRGQSGQKKRSTV) are disordered. Residues 16–28 (KEKHRKGRGHAAG) are compositionally biased toward basic residues.

Belongs to the universal ribosomal protein uL15 family. Part of the 50S ribosomal subunit.

Functionally, binds to the 23S rRNA. The chain is Large ribosomal subunit protein uL15 from Mesomycoplasma hyopneumoniae (strain J / ATCC 25934 / NCTC 10110) (Mycoplasma hyopneumoniae).